A 557-amino-acid polypeptide reads, in one-letter code: Probable serine/threonine-protein kinase WNK7 (557 aa).

In terms of domain architecture, Protein kinase spans 28 to 285 (IRYKEVIGKG…AEELLLDSFL (258 aa)). Residues 108-111 (TELF) and Lys-158 each bind ATP. Asp-175 acts as the Proton acceptor in catalysis. A compositionally biased stretch (polar residues) spans 451-477 (QNQSSKDNHQNGASSQAGESISHSLSS). The tract at residues 451-517 (QNQSSKDNHQ…EEEEDERLKE (67 aa)) is disordered. Ser-505 carries the phosphoserine modification.

The protein belongs to the protein kinase superfamily. Ser/Thr protein kinase family. WNK subfamily.

The enzyme catalyses L-seryl-[protein] + ATP = O-phospho-L-seryl-[protein] + ADP + H(+). The catalysed reaction is L-threonyl-[protein] + ATP = O-phospho-L-threonyl-[protein] + ADP + H(+). In terms of biological role, may regulate flowering time by modulating the photoperiod pathway. In Arabidopsis thaliana (Mouse-ear cress), this protein is Probable serine/threonine-protein kinase WNK7 (WNK7).